The sequence spans 264 residues: S-adenosylmethionine decarboxylase proenzyme (264 aa).

The active-site Schiff-base intermediate with substrate; via pyruvic acid is serine 112. The residue at position 112 (serine 112) is a Pyruvic acid (Ser); by autocatalysis. Residue histidine 117 is the Proton acceptor; for processing activity of the active site. Cysteine 140 acts as the Proton donor; for catalytic activity in catalysis.

The protein belongs to the prokaryotic AdoMetDC family. Type 2 subfamily. Heterooctamer of four alpha and four beta chains arranged as a tetramer of alpha/beta heterodimers. The cofactor is pyruvate. In terms of processing, is synthesized initially as an inactive proenzyme. Formation of the active enzyme involves a self-maturation process in which the active site pyruvoyl group is generated from an internal serine residue via an autocatalytic post-translational modification. Two non-identical subunits are generated from the proenzyme in this reaction, and the pyruvate is formed at the N-terminus of the alpha chain, which is derived from the carboxyl end of the proenzyme. The post-translation cleavage follows an unusual pathway, termed non-hydrolytic serinolysis, in which the side chain hydroxyl group of the serine supplies its oxygen atom to form the C-terminus of the beta chain, while the remainder of the serine residue undergoes an oxidative deamination to produce ammonia and the pyruvoyl group blocking the N-terminus of the alpha chain.

The enzyme catalyses S-adenosyl-L-methionine + H(+) = S-adenosyl 3-(methylsulfanyl)propylamine + CO2. Its pathway is amine and polyamine biosynthesis; S-adenosylmethioninamine biosynthesis; S-adenosylmethioninamine from S-adenosyl-L-methionine: step 1/1. Its function is as follows. Catalyzes the decarboxylation of S-adenosylmethionine to S-adenosylmethioninamine (dcAdoMet), the propylamine donor required for the synthesis of the polyamines spermine and spermidine from the diamine putrescine. This Yersinia pseudotuberculosis serotype I (strain IP32953) protein is S-adenosylmethionine decarboxylase proenzyme.